Reading from the N-terminus, the 63-residue chain is Conotoxin Lt11.1 (63 aa).

Residues 1 to 23 form the signal peptide; the sequence is MMFRLTSVLLVIVLLNLVVLTNA. Cystine bridges form between Cys24-Cys34, Cys28-Cys39, Cys33-Cys42, and Cys38-Cys47. A propeptide spanning residues 53-63 is cleaved from the precursor; that stretch reads ALLQRLLGHQR.

This sequence belongs to the conotoxin I2 superfamily. As to expression, expressed by the venom duct.

The protein localises to the secreted. The chain is Conotoxin Lt11.1 from Conus litteratus (Lettered cone).